Here is a 357-residue protein sequence, read N- to C-terminus: uncharacterized protein (357 aa).

A disordered region spans residues 120-145; it reads SSSTVNHDQPAEQPSDKSTDDSTGYP.

This is an uncharacterized protein from Caenorhabditis elegans.